The primary structure comprises 443 residues: Thymidine phosphorylase (443 aa).

Belongs to the thymidine/pyrimidine-nucleoside phosphorylase family. As to quaternary structure, homodimer.

It carries out the reaction thymidine + phosphate = 2-deoxy-alpha-D-ribose 1-phosphate + thymine. The protein operates within pyrimidine metabolism; dTMP biosynthesis via salvage pathway; dTMP from thymine: step 1/2. The enzymes which catalyze the reversible phosphorolysis of pyrimidine nucleosides are involved in the degradation of these compounds and in their utilization as carbon and energy sources, or in the rescue of pyrimidine bases for nucleotide synthesis. The sequence is that of Thymidine phosphorylase from Shewanella baltica (strain OS185).